The primary structure comprises 118 residues: Basic phospholipase A2 1 (118 aa).

7 disulfides stabilise this stretch: Cys11–Cys72, Cys26–Cys117, Cys28–Cys44, Cys43–Cys98, Cys50–Cys91, Cys60–Cys84, and Cys78–Cys89. 3 residues coordinate Ca(2+): Tyr27, Gly29, and Gly31. Residue His47 is part of the active site. Asp48 is a binding site for Ca(2+). Asp92 is a catalytic residue.

Belongs to the phospholipase A2 family. Group I subfamily. D49 sub-subfamily. Requires Ca(2+) as cofactor. As to expression, expressed by the venom gland.

The protein resides in the secreted. It catalyses the reaction a 1,2-diacyl-sn-glycero-3-phosphocholine + H2O = a 1-acyl-sn-glycero-3-phosphocholine + a fatty acid + H(+). PLA2 catalyzes the calcium-dependent hydrolysis of the 2-acyl groups in 3-sn-phosphoglycerides. The chain is Basic phospholipase A2 1 from Naja melanoleuca (Forest cobra).